Here is a 1315-residue protein sequence, read N- to C-terminus: Probable nucleoporin C890.06 (1315 aa).

This sequence belongs to the non-repetitive/WGA-negative nucleoporin family.

The protein resides in the cytoplasm. It is found in the nucleus. This Schizosaccharomyces pombe (strain 972 / ATCC 24843) (Fission yeast) protein is Probable nucleoporin C890.06.